Here is a 256-residue protein sequence, read N- to C-terminus: Major prion protein (256 aa).

A signal peptide spans 1-24 (MVKSHIGSWILVLFVAMWSDVGLC). Residues 25-233 (KKRPKPGGGW…ESQAYYQRGA (209 aa)) form an interaction with GRB2, ERI3 and SYN1 region. Positions 28-110 (PKPGGGWNTG…QWNKPSKPKT (83 aa)) are disordered. Repeat copies occupy residues 54-62 (PQGGGGWGQ), 63-70 (PHGGGWGQ), 71-78 (PHGGGWGQ), 79-86 (PHGGGWGQ), and 87-95 (PHGGGGWGQ). The 5 X 8 AA tandem repeats of P-H-G-G-G-W-G-Q stretch occupies residues 54 to 95 (PQGGGGWGQPHGGGWGQPHGGGWGQPHGGGWGQPHGGGGWGQ). Residues 55–97 (QGGGGWGQPHGGGWGQPHGGGWGQPHGGGWGQPHGGGGWGQGG) are compositionally biased toward gly residues. The Cu(2+) site is built by histidine 64, glycine 65, glycine 66, histidine 72, glycine 73, glycine 74, histidine 80, glycine 81, glycine 82, histidine 88, glycine 90, and glycine 91. A disulfide bond links cysteine 182 and cysteine 217. Residues asparagine 184 and asparagine 200 are each glycosylated (N-linked (GlcNAc...) (complex) asparagine). Alanine 233 carries the GPI-anchor amidated alanine lipid modification. Residues 234–256 (SVILFSSPPVILLISFLIFLIVG) constitute a propeptide, removed in mature form.

Belongs to the prion family. In terms of assembly, monomer and homodimer. Has a tendency to aggregate into amyloid fibrils containing a cross-beta spine, formed by a steric zipper of superposed beta-strands. Soluble oligomers may represent an intermediate stage on the path to fibril formation. Copper binding may promote oligomerization. Interacts with GRB2, APP, ERI3/PRNPIP and SYN1. Mislocalized cytosolically exposed PrP interacts with MGRN1; this interaction alters MGRN1 subcellular location and causes lysosomal enlargement. Interacts with KIAA1191.

It localises to the cell membrane. Its subcellular location is the golgi apparatus. In terms of biological role, its primary physiological function is unclear. Has cytoprotective activity against internal or environmental stresses. May play a role in neuronal development and synaptic plasticity. May be required for neuronal myelin sheath maintenance. May play a role in iron uptake and iron homeostasis. Soluble oligomers are toxic to cultured neuroblastoma cells and induce apoptosis (in vitro). Association with GPC1 (via its heparan sulfate chains) targets PRNP to lipid rafts. Also provides Cu(2+) or Zn(2+) for the ascorbate-mediated GPC1 deaminase degradation of its heparan sulfate side chains. The protein is Major prion protein (PRNP) of Ovis aries (Sheep).